A 401-amino-acid polypeptide reads, in one-letter code: Imidazolonepropionase (401 aa).

Positions 70 and 72 each coordinate Fe(3+). Residues H70 and H72 each contribute to the Zn(2+) site. 3 residues coordinate 4-imidazolone-5-propanoate: R79, Y142, and H175. Y142 contributes to the N-formimidoyl-L-glutamate binding site. A Fe(3+)-binding site is contributed by H240. Zn(2+) is bound at residue H240. Q243 lines the 4-imidazolone-5-propanoate pocket. D315 is a binding site for Fe(3+). D315 lines the Zn(2+) pocket. N-formimidoyl-L-glutamate is bound by residues N317 and G319. T320 is a 4-imidazolone-5-propanoate binding site.

This sequence belongs to the metallo-dependent hydrolases superfamily. HutI family. Requires Zn(2+) as cofactor. It depends on Fe(3+) as a cofactor.

The protein resides in the cytoplasm. The enzyme catalyses 4-imidazolone-5-propanoate + H2O = N-formimidoyl-L-glutamate. It participates in amino-acid degradation; L-histidine degradation into L-glutamate; N-formimidoyl-L-glutamate from L-histidine: step 3/3. Catalyzes the hydrolytic cleavage of the carbon-nitrogen bond in imidazolone-5-propanoate to yield N-formimidoyl-L-glutamate. It is the third step in the universal histidine degradation pathway. The polypeptide is Imidazolonepropionase (Caulobacter sp. (strain K31)).